The sequence spans 654 residues: Peptide-N(4)-(N-acetyl-beta-glucosaminyl)asparagine amidase (654 aa).

Position 2 is an N-acetylalanine (Ala2). Residues 30 to 91 form the PUB domain; that stretch reads EASKLLLTYA…EGETHLIFPK (62 aa). The segment covering 112-123 has biased composition (basic and acidic residues); the sequence is RLDGSNKSHKVE. A disordered region spans residues 112 to 167; it reads RLDGSNKSHKVESSQQPAASTQLPTTPSSNPSGLNQHTRNRQGQSPDPPSASTVTP. The segment covering 124 to 167 has biased composition (polar residues); the sequence is SSQQPAASTQLPTTPSSNPSGLNQHTRNRQGQSPDPPSASTVTP. Phosphothreonine is present on Thr137. The Zn(2+) site is built by Cys250, Cys253, Cys283, and Cys286. The active-site Nucleophile is Cys309. Catalysis depends on residues His336 and Asp353. A PAW domain is found at 454–654; the sequence is ELGGRISGSV…LEIIIKFSDL (201 aa).

This sequence belongs to the transglutaminase-like superfamily. PNGase family. As to quaternary structure, component of a complex required to couple retrotranslocation, ubiquitination and deglycosylation composed of NGLY1, SAKS1, AMFR, VCP and RAD23B. Interacts with the proteasome components RAD23B and PSMC1. Interacts with directly with VCP. Interacts with DERL1, bringing it close to the endoplasmic reticulum membrane. Interacts with SAKS1. Zn(2+) is required as a cofactor.

It localises to the cytoplasm. It catalyses the reaction Hydrolysis of an N(4)-(acetyl-beta-D-glucosaminyl)asparagine residue in which the glucosamine residue may be further glycosylated, to yield a (substituted) N-acetyl-beta-D-glucosaminylamine and a peptide containing an aspartate residue.. Inhibited by Z-VAD-fmk, a well-known caspase inhibitor, which inhibits enzyme activity through covalent binding of the carbohydrate to the single Cys-306 residue. Specifically deglycosylates the denatured form of N-linked glycoproteins in the cytoplasm and assists their proteasome-mediated degradation. Cleaves the beta-aspartyl-glucosamine (GlcNAc) of the glycan and the amide side chain of Asn, converting Asn to Asp. Prefers proteins containing high-mannose over those bearing complex type oligosaccharides. Can recognize misfolded proteins in the endoplasmic reticulum that are exported to the cytosol to be destroyed and deglycosylate them, while it has no activity toward native proteins. Deglycosylation is a prerequisite for subsequent proteasome-mediated degradation of some, but not all, misfolded glycoproteins. The chain is Peptide-N(4)-(N-acetyl-beta-glucosaminyl)asparagine amidase (NGLY1) from Macaca fascicularis (Crab-eating macaque).